A 402-amino-acid polypeptide reads, in one-letter code: Zinc finger CCCH domain-containing protein 35 (402 aa).

C3H1-type zinc fingers lie at residues 117–144 (CYSGTACPDFRKGGCKRGDACEFAHGVF) and 152–176 (RYRTQPCKDGTACRRRVCFFAHTPD). Disordered stretches follow at residues 180–211 (VLPPSQQQGSNSPRGCGGGGAGAAASPLAESY) and 232–258 (SSPTSTLVSPPRSPPSESPPLSPDAAG). Residues 183–192 (PSQQQGSNSP) show a composition bias toward polar residues. Residues 232–241 (SSPTSTLVSP) are compositionally biased toward low complexity. The segment covering 242–253 (PRSPPSESPPLS) has biased composition (pro residues).

In Oryza sativa subsp. japonica (Rice), this protein is Zinc finger CCCH domain-containing protein 35.